We begin with the raw amino-acid sequence, 82 residues long: Putative Fe(2+) transport protein A (82 aa).

Belongs to the FeoA family.

In terms of biological role, might be involved in Fe(2+) ion uptake. The chain is Putative Fe(2+) transport protein A from Methanocaldococcus jannaschii (strain ATCC 43067 / DSM 2661 / JAL-1 / JCM 10045 / NBRC 100440) (Methanococcus jannaschii).